A 595-amino-acid chain; its full sequence is GRB2-associated-binding protein 3 (595 aa).

The region spanning 5–117 (DTVCMGWLIK…WVHSISQVCN (113 aa)) is the PH domain. Residues 295–339 (SGVKELNIMSNTPPPRPPKPSYLSEQRQDQPLLTGHSSNKKPGYT) form a disordered region. Over residues 317–331 (LSEQRQDQPLLTGHS) the composition is skewed to polar residues. S346 carries the phosphoserine modification. Disordered regions lie at residues 389–408 (PSAEDSYVPMSPKGTASELR) and 418–463 (PMSS…QEHT). A compositionally biased stretch (polar residues) spans 454 to 463 (RNLSTIQEHT). A Phosphoserine modification is found at S480. The interval 493–513 (STPSEEEEEEEEEEEEEEEEE) is disordered. A compositionally biased stretch (acidic residues) spans 496–513 (SEEEEEEEEEEEEEEEEE).

Belongs to the GAB family. Interacts with PIK3R/p85, SHP2 and GRAP2/MONA. May interact with Grb2. Phosphorylated on tyrosine residue(s) after macrophage colony-stimulating factor (M-CSF) receptor stimulation. In terms of tissue distribution, highly expressed in spleen and thymus and weakly in brain, heart, lung, kidney, uterus, and embryonic stem cells. Also expressed in myeloid and macrophage cell lines.

The protein is GRB2-associated-binding protein 3 (Gab3) of Mus musculus (Mouse).